We begin with the raw amino-acid sequence, 145 residues long: Putative pre-16S rRNA nuclease (145 aa).

This sequence belongs to the YqgF nuclease family.

It is found in the cytoplasm. Could be a nuclease involved in processing of the 5'-end of pre-16S rRNA. This is Putative pre-16S rRNA nuclease from Pseudomonas fluorescens (strain Pf0-1).